Consider the following 580-residue polypeptide: Isochorismate synthase, chloroplastic (580 aa).

The N-terminal 91 residues, 1-91, are a transit peptide targeting the chloroplast; that stretch reads MASITGHCVA…LAMERLSSAV (91 aa).

Belongs to the isochorismate synthase family. Requires Mg(2+) as cofactor.

It is found in the plastid. It localises to the chloroplast. The enzyme catalyses chorismate = isochorismate. Not inhibited by Tyr, Phe or Trp. Its function is as follows. Involved in the synthesis of o-succinylbenzoic acid, 2,3-dihydroxybenzoic acid and salicylic acid (SA). This is Isochorismate synthase, chloroplastic from Catharanthus roseus (Madagascar periwinkle).